Here is a 261-residue protein sequence, read N- to C-terminus: MNRIDGREFNELRPIKITRNFNKFAEGSVLIEMGETKVICTASIEDKVPPFQKGTGKGWITSEYGMLPRATEVRNPREVTKGRPSGRTMEIQRLIGRSLRAVVDLEALGERTIWIDCDVIQADGGTRTASITGSFIALADALNKLVEKGELQKIPLKSFVAAVSVGIVEGNKLLDLSFQEDANALVDMNVVMTDKGEIVEIQGTGEGGPFSRQNFEELLDLAAHGIEQIIKIQKEVLSDIADKIGVENVEVDSGNSQSQQG.

Phosphate is bound by residues Arg87 and 125–127 (GTR).

This sequence belongs to the RNase PH family. As to quaternary structure, homohexameric ring arranged as a trimer of dimers.

It carries out the reaction tRNA(n+1) + phosphate = tRNA(n) + a ribonucleoside 5'-diphosphate. Its function is as follows. Phosphorolytic 3'-5' exoribonuclease that plays an important role in tRNA 3'-end maturation. Removes nucleotide residues following the 3'-CCA terminus of tRNAs; can also add nucleotides to the ends of RNA molecules by using nucleoside diphosphates as substrates, but this may not be physiologically important. Probably plays a role in initiation of 16S rRNA degradation (leading to ribosome degradation) during starvation. The polypeptide is Ribonuclease PH (Caldanaerobacter subterraneus subsp. tengcongensis (strain DSM 15242 / JCM 11007 / NBRC 100824 / MB4) (Thermoanaerobacter tengcongensis)).